Reading from the N-terminus, the 421-residue chain is RNase J-like protein (421 aa).

Positions 55, 57, 59, 60, 132, 153, and 389 each coordinate Zn(2+).

This sequence belongs to the metallo-beta-lactamase superfamily. RNA-metabolizing metallo-beta-lactamase-like family. As to quaternary structure, forms homodimers on heating to 60 degrees Celsius which may be the active form. The cofactor is Zn(2+).

Its activity is regulated as follows. Inhibited by imidazole. Its function is as follows. A 5'-3' exoribonuclease with a strong reference for 5'-monophosphorylated RNA and no endoribonuclease activty. This is RNase J-like protein from Methanocaldococcus jannaschii (strain ATCC 43067 / DSM 2661 / JAL-1 / JCM 10045 / NBRC 100440) (Methanococcus jannaschii).